A 259-amino-acid polypeptide reads, in one-letter code: UPF0246 protein Pfl01_0961 (259 aa).

Belongs to the UPF0246 family.

This is UPF0246 protein Pfl01_0961 from Pseudomonas fluorescens (strain Pf0-1).